Consider the following 100-residue polypeptide: Apolipoprotein C-II (100 aa).

Positions methionine 1–glycine 22 are cleaved as a signal peptide. Residues serine 66–methionine 74 form a lipid binding region. The tract at residues serine 78 to glutamate 100 is lipoprotein lipase cofactor.

Belongs to the apolipoprotein C2 family. In terms of processing, proapolipoprotein C-II is synthesized as a sialic acid containing glycoprotein which is subsequently desialylated prior to its proteolytic processing. Post-translationally, proapolipoprotein C-II, the major form found in plasma undergoes proteolytic cleavage of its N-terminal hexapeptide to generate the mature form apolipoprotein C-II, which occurs as the minor form in plasma.

The protein localises to the secreted. Functionally, component of chylomicrons, very low-density lipoproteins (VLDL), low-density lipoproteins (LDL), and high-density lipoproteins (HDL) in plasma. Plays an important role in lipoprotein metabolism as an activator of lipoprotein lipase. This Cricetulus griseus (Chinese hamster) protein is Apolipoprotein C-II (APOC2).